A 331-amino-acid polypeptide reads, in one-letter code: Phenylalanine--tRNA ligase alpha subunit (331 aa).

Glu-252 is a binding site for Mg(2+).

It belongs to the class-II aminoacyl-tRNA synthetase family. Phe-tRNA synthetase alpha subunit type 1 subfamily. Tetramer of two alpha and two beta subunits. Mg(2+) serves as cofactor.

It localises to the cytoplasm. The catalysed reaction is tRNA(Phe) + L-phenylalanine + ATP = L-phenylalanyl-tRNA(Phe) + AMP + diphosphate + H(+). This chain is Phenylalanine--tRNA ligase alpha subunit, found in Xanthomonas oryzae pv. oryzae (strain MAFF 311018).